We begin with the raw amino-acid sequence, 474 residues long: 1-aminocyclopropane-1-carboxylate synthase 4 (474 aa).

Residues E47 and Y85 each contribute to the substrate site. K273 bears the N6-(pyridoxal phosphate)lysine mark.

This sequence belongs to the class-I pyridoxal-phosphate-dependent aminotransferase family. In terms of assembly, homodimer and heterodimer. In vivo, the relevance of heterodimerization with other ACS enzymes is however unsure. Interacts with XBAT32. Interacts (via its C-terminal region) with ETO1 and EOL1. Pyridoxal 5'-phosphate serves as cofactor. Post-translationally, ubiquitinated by XBAT32. Ubiquitination probably leads to its subsequent degradation, thus controlling ethylene production. In terms of tissue distribution, expressed in roots, leaves and flowers.

It carries out the reaction S-adenosyl-L-methionine = 1-aminocyclopropane-1-carboxylate + S-methyl-5'-thioadenosine + H(+). The protein operates within alkene biosynthesis; ethylene biosynthesis via S-adenosyl-L-methionine; ethylene from S-adenosyl-L-methionine: step 1/2. In terms of biological role, 1-aminocyclopropane-1-carboxylate synthase (ACS) enzymes catalyze the conversion of S-adenosyl-L-methionine (SAM) into 1-aminocyclopropane-1-carboxylate (ACC), a direct precursor of ethylene. The sequence is that of 1-aminocyclopropane-1-carboxylate synthase 4 (ACS4) from Arabidopsis thaliana (Mouse-ear cress).